Reading from the N-terminus, the 248-residue chain is 2,3-bisphosphoglycerate-dependent phosphoglycerate mutase (248 aa).

Substrate-binding positions include 9 to 16 (RHGHSEWN), 22 to 23 (TG), Arg61, 88 to 91 (ERHY), Lys99, 115 to 116 (RR), and 183 to 184 (GN). The active-site Tele-phosphohistidine intermediate is His10. The active-site Proton donor/acceptor is the Glu88.

It belongs to the phosphoglycerate mutase family. BPG-dependent PGAM subfamily.

The catalysed reaction is (2R)-2-phosphoglycerate = (2R)-3-phosphoglycerate. The protein operates within carbohydrate degradation; glycolysis; pyruvate from D-glyceraldehyde 3-phosphate: step 3/5. Catalyzes the interconversion of 2-phosphoglycerate and 3-phosphoglycerate. This Arthrobacter sp. (strain FB24) protein is 2,3-bisphosphoglycerate-dependent phosphoglycerate mutase.